Reading from the N-terminus, the 317-residue chain is MKI67 FHA domain-interacting nucleolar phosphoprotein (317 aa).

Position 2 is an N-acetylalanine (A2). A Glycyl lysine isopeptide (Lys-Gly) (interchain with G-Cter in SUMO2) cross-link involves residue K40. An RRM domain is found at 47-125; it reads GVVYLGHLPS…RLLSCKFMPR (79 aa). R116 is subject to Omega-N-methylarginine. Glycyl lysine isopeptide (Lys-Gly) (interchain with G-Cter in SUMO2) cross-links involve residues K181 and K194. Residue R203 is modified to Citrulline. The tract at residues 203-317 is disordered; the sequence is RDSEGNQVLP…KRPRKRKSKQ (115 aa). A compositionally biased stretch (basic and acidic residues) spans 213–233; the sequence is DQKEGLSGEPRRKEKMMKEDI. A Phosphoserine modification is found at S219. Over residues 238–248 the composition is skewed to basic residues; the sequence is PKKRKRSRRKK. Phosphoserine is present on S253. Residues T257 and T261 each carry the phosphothreonine modification. The segment covering 265 to 284 has biased composition (basic and acidic residues); sequence LERRKSQVMEVGGDKDDEII. R267 and R268 each carry omega-N-methylated arginine. The residue at position 270 (S270) is a Phosphoserine. Residue K293 forms a Glycyl lysine isopeptide (Lys-Gly) (interchain with G-Cter in SUMO1); alternate linkage. K293 is covalently cross-linked (Glycyl lysine isopeptide (Lys-Gly) (interchain with G-Cter in SUMO2); alternate). T301 is subject to Phosphothreonine. Residues 308-317 are compositionally biased toward basic residues; sequence KRPRKRKSKQ.

As to quaternary structure, binds to the FHA domain of MKI67; this interaction is enhanced in mitosis. Post-translationally, phosphorylated. Citrullinated by PADI4. As to expression, expressed in brain, heart, hind limb muscles, intestine, liver, skin and spleen.

The protein localises to the nucleus. It is found in the nucleolus. Its subcellular location is the chromosome. The protein is MKI67 FHA domain-interacting nucleolar phosphoprotein (Nifk) of Mus musculus (Mouse).